The chain runs to 43 residues: Parvalbumin beta (43 aa).

EF-hand domains follow at residues 1–20 (KVFE…LKLF) and 22–43 (LSSA…ALVK). Residues aspartate 7, aspartate 9, serine 11, phenylalanine 12, glutamate 14, glutamate 16, and glutamate 37 each contribute to the Ca(2+) site.

As to expression, detected in muscle and cutaneous mucus. In the skin, detected in cells in the basal region of the glandular epithelium of the dermal mucus glands (at protein level).

It is found in the cytoplasm. The protein localises to the secreted. In muscle, parvalbumin is thought to be involved in relaxation after contraction. It binds two calcium ions. This Rana temporaria (European common frog) protein is Parvalbumin beta.